The following is a 361-amino-acid chain: GTP 3',8-cyclase (361 aa).

The segment at 1–30 (MTVTALGLPTVARSTGDGSAGASPAPADGP) is disordered. Residues 16–30 (GDGSAGASPAPADGP) are compositionally biased toward low complexity. Residues 34 to 252 (TYGRAATDLR…LQQHFELTPD (219 aa)) enclose the Radical SAM core domain. GTP is bound at residue R43. [4Fe-4S] cluster is bound by residues C50 and C54. S-adenosyl-L-methionine is bound at residue Y56. [4Fe-4S] cluster is bound at residue C57. R94 provides a ligand contact to GTP. G98 serves as a coordination point for S-adenosyl-L-methionine. T125 lines the GTP pocket. S149 contacts S-adenosyl-L-methionine. K186 is a binding site for GTP. M220 is an S-adenosyl-L-methionine binding site. 2 residues coordinate [4Fe-4S] cluster: C288 and C291. 293–295 (RTR) is a GTP binding site. C305 is a [4Fe-4S] cluster binding site.

The protein belongs to the radical SAM superfamily. MoaA family. Monomer and homodimer. [4Fe-4S] cluster serves as cofactor.

It carries out the reaction GTP + AH2 + S-adenosyl-L-methionine = (8S)-3',8-cyclo-7,8-dihydroguanosine 5'-triphosphate + 5'-deoxyadenosine + L-methionine + A + H(+). It functions in the pathway cofactor biosynthesis; molybdopterin biosynthesis. In terms of biological role, catalyzes the cyclization of GTP to (8S)-3',8-cyclo-7,8-dihydroguanosine 5'-triphosphate. The protein is GTP 3',8-cyclase of Mycolicibacterium smegmatis (strain ATCC 700084 / mc(2)155) (Mycobacterium smegmatis).